Reading from the N-terminus, the 221-residue chain is N-(5'-phosphoribosyl)anthranilate isomerase (221 aa).

The protein belongs to the TrpF family.

It carries out the reaction N-(5-phospho-beta-D-ribosyl)anthranilate = 1-(2-carboxyphenylamino)-1-deoxy-D-ribulose 5-phosphate. Its pathway is amino-acid biosynthesis; L-tryptophan biosynthesis; L-tryptophan from chorismate: step 3/5. This is N-(5'-phosphoribosyl)anthranilate isomerase from Chlorobaculum tepidum (strain ATCC 49652 / DSM 12025 / NBRC 103806 / TLS) (Chlorobium tepidum).